Consider the following 164-residue polypeptide: Large ribosomal subunit protein uL10 (164 aa).

Belongs to the universal ribosomal protein uL10 family. Part of the ribosomal stalk of the 50S ribosomal subunit. The N-terminus interacts with L11 and the large rRNA to form the base of the stalk. The C-terminus forms an elongated spine to which L12 dimers bind in a sequential fashion forming a multimeric L10(L12)X complex.

Forms part of the ribosomal stalk, playing a central role in the interaction of the ribosome with GTP-bound translation factors. In Aliivibrio fischeri (strain MJ11) (Vibrio fischeri), this protein is Large ribosomal subunit protein uL10.